A 716-amino-acid chain; its full sequence is Phospholipid phosphatase-related protein type 3 (716 aa).

The next 3 membrane-spanning stretches (helical) occupy residues 18–38 (LPCF…SLYF), 70–90 (LIPL…SIMV), and 131–151 (FVGV…VIQL). N-linked (GlcNAc...) asparagine glycosylation is present at N167. 3 consecutive transmembrane segments (helical) span residues 205-225 (HATL…SVIS), 231-251 (LKPI…LTQI), and 261-281 (VYAG…HAVG). The disordered stretch occupies residues 311 to 334 (SMYQQNKSVSTDELGPPGRLEGVP). A compositionally biased stretch (polar residues) spans 312–321 (MYQQNKSVST). N316 carries an N-linked (GlcNAc...) asparagine glycan. Residues S320 and S351 each carry the phosphoserine modification. Position 374 is a phosphothreonine (T374). The segment at 416 to 488 (GRGLGLPDEA…RVILPPRPGP (73 aa)) is disordered. Position 426 is a phosphoserine (S426). A compositionally biased stretch (acidic residues) spans 437–460 (VAEEEEEEEEEEEEEEEEEEEEEG). Phosphoserine is present on S506. Positions 548-589 (AMSKAAGGPKAETASSSSASSDSSQYRSPSDRDSASIVTIDA) are disordered. Over residues 562–575 (SSSSASSDSSQYRS) the composition is skewed to low complexity. Residue S641 is modified to Phosphoserine. The interval 664-694 (GEGLPPPGASEGALGAGSRESTLRRQVGALG) is disordered.

The protein belongs to the PA-phosphatase related phosphoesterase family.

The protein resides in the membrane. The polypeptide is Phospholipid phosphatase-related protein type 3 (Rattus norvegicus (Rat)).